Here is a 118-residue protein sequence, read N- to C-terminus: Small ribosomal subunit protein uS13 (118 aa).

The tract at residues 91–118 is disordered; the sequence is HRRGLPVRGQRTKTNARTRKGPRKPIKK.

Belongs to the universal ribosomal protein uS13 family. Part of the 30S ribosomal subunit. Forms a loose heterodimer with protein S19. Forms two bridges to the 50S subunit in the 70S ribosome.

Functionally, located at the top of the head of the 30S subunit, it contacts several helices of the 16S rRNA. In the 70S ribosome it contacts the 23S rRNA (bridge B1a) and protein L5 of the 50S subunit (bridge B1b), connecting the 2 subunits; these bridges are implicated in subunit movement. Contacts the tRNAs in the A and P-sites. In Hamiltonella defensa subsp. Acyrthosiphon pisum (strain 5AT), this protein is Small ribosomal subunit protein uS13.